Here is a 224-residue protein sequence, read N- to C-terminus: Probable amino-acid permease protein YxeN (224 aa).

6 helical membrane passes run 3 to 23 (TIDWEFMISAFPTLIQALPIT), 24 to 44 (LFMAIAAMIFAIIGGLILALI), 58 to 78 (LYISFFRGVPTLVQLFLIYYG), 91 to 111 (ALTAAIIGLSLKNAAYLAEIF), 157 to 177 (FIGLLKETSLAFTLGVMEMFA), and 190 to 210 (FETYLAVAIVYWVLTIIYSIL). The region spanning 20-211 (LPITLFMAIA…VLTIIYSILQ (192 aa)) is the ABC transmembrane type-1 domain.

It belongs to the binding-protein-dependent transport system permease family. As to quaternary structure, the complex is composed of two ATP-binding proteins (YxeO), two transmembrane proteins (YxeN) and a solute-binding protein (YxeM).

It localises to the cell membrane. In terms of biological role, probably part of the ABC transporter complex YxeMNO that could be involved in amino-acid import. May transport S-methylcysteine. Probably responsible for the translocation of the substrate across the membrane. This chain is Probable amino-acid permease protein YxeN (yxeN), found in Bacillus subtilis (strain 168).